The primary structure comprises 204 residues: MTAEAPPDDDIIEPEMLLRAYATGIFPMAEEADDPEVFWVRPEKRGVIPLDGFHIPRSLQKTIRQGIFKIRLDSNFAGVIEGCASGTGERARTWINEPIRRAYAKLFEIGHCHTVEAWYEGKLAGGLYGVTLGRAFFGESMFTRKRDASKVCLAYLVQHLSRQGFVLLDTQFTTPHLERFGALEVPRKEYEEMLERALEGIARF.

It belongs to the L/F-transferase family.

The protein localises to the cytoplasm. The catalysed reaction is N-terminal L-lysyl-[protein] + L-leucyl-tRNA(Leu) = N-terminal L-leucyl-L-lysyl-[protein] + tRNA(Leu) + H(+). It catalyses the reaction N-terminal L-arginyl-[protein] + L-leucyl-tRNA(Leu) = N-terminal L-leucyl-L-arginyl-[protein] + tRNA(Leu) + H(+). It carries out the reaction L-phenylalanyl-tRNA(Phe) + an N-terminal L-alpha-aminoacyl-[protein] = an N-terminal L-phenylalanyl-L-alpha-aminoacyl-[protein] + tRNA(Phe). In terms of biological role, functions in the N-end rule pathway of protein degradation where it conjugates Leu, Phe and, less efficiently, Met from aminoacyl-tRNAs to the N-termini of proteins containing an N-terminal arginine or lysine. The chain is Leucyl/phenylalanyl-tRNA--protein transferase from Brucella abortus (strain 2308).